The chain runs to 55 residues: MAKAVTIKVKLVSSADTGFYYVAKKNSRTMTDKLVKKKYDPVARKHVEFREAKIK.

The protein belongs to the bacterial ribosomal protein bL33 family.

The chain is Large ribosomal subunit protein bL33 from Bradyrhizobium diazoefficiens (strain JCM 10833 / BCRC 13528 / IAM 13628 / NBRC 14792 / USDA 110).